We begin with the raw amino-acid sequence, 1106 residues long: Probable NAD-specific glutamate dehydrogenase (1106 aa).

Lysine 654 is an active-site residue.

This sequence belongs to the Glu/Leu/Phe/Val dehydrogenases family. Homotetramer.

It is found in the cytoplasm. It catalyses the reaction L-glutamate + NAD(+) + H2O = 2-oxoglutarate + NH4(+) + NADH + H(+). Functionally, NAD(+)-dependent glutamate dehydrogenase which degrades glutamate to ammonia and alpha-ketoglutarate. This is Probable NAD-specific glutamate dehydrogenase (gdh2) from Schizosaccharomyces pombe (strain 972 / ATCC 24843) (Fission yeast).